The chain runs to 1173 residues: Calcium-transporting ATPase 2 (1173 aa).

The tract at residues 1-24 is disordered; it reads MSRQDENSALLANNENNKPSYTGN. Residues 1-114 are Cytoplasmic-facing; the sequence is MSRQDENSAL…LQLVWAAFND (114 aa). Positions 7-17 are enriched in low complexity; the sequence is NSALLANNENN. A helical membrane pass occupies residues 115-139; sequence KTMQLLTVAAVVSFVLGLYELWMQP. At 140-152 the chain is on the vacuolar side; sequence PQYDPEGNKIKQV. The helical transmembrane segment at 153–173 threads the bilayer; it reads DWIEGVAIMIAVFVVVLVSAA. The Cytoplasmic portion of the chain corresponds to 174-349; the sequence is NDYQKELQFA…LADNISVYGC (176 aa). Residues 350–368 form a helical membrane-spanning segment; it reads VSAIILFLVLFTRYLFYII. Residues 369–388 are Vacuolar-facing; it reads PEDGRFHDLDPAQKGSKFMN. The chain crosses the membrane as a helical span at residues 389 to 409; that stretch reads IFITSITVIVVAVPEGLPLAV. Residues Val-398 and Glu-403 each contribute to the Ca(2+) site. Residues 410–899 lie on the Cytoplasmic side of the membrane; it reads TLALAFATTR…RCVSVSIKKF (490 aa). The active-site 4-aspartylphosphate intermediate is Asp-445. Mg(2+) contacts are provided by Asp-445 and Thr-447. ATP contacts are provided by residues Thr-447, Lys-643, 762-764, Arg-816, and Lys-822; that span reads TGD. Position 841 (Asp-841) interacts with Mg(2+). Residue Asn-844 coordinates ATP. A helical transmembrane segment spans residues 900–922; sequence IQFQLIVNITAVILTFVSSVASS. Position 907 (Asn-907) interacts with Ca(2+). Residues 923 to 929 lie on the Vacuolar side of the membrane; it reads DETSVLT. Residues 930–950 traverse the membrane as a helical segment; the sequence is AVQLLWINLIMDTLAALALAT. Ca(2+) contacts are provided by Asn-937 and Asp-941. Residues 951–976 are Cytoplasmic-facing; the sequence is DKPDPNIMDRKPRGRSTSLISVSTWK. The chain crosses the membrane as a helical span at residues 977–998; the sequence is MILSQATLQLIVTFILHFYGPE. At 999-1010 the chain is on the vacuolar side; the sequence is LFFKKHEDEITS. A helical membrane pass occupies residues 1011-1029; that stretch reads HQQQQLNAMTFNTFVWLQF. Topologically, residues 1030-1065 are cytoplasmic; the sequence is FTMLVSRKLDEGDGISNWRGRISAANLNFFQDLGRN. The chain crosses the membrane as a helical span at residues 1066–1086; sequence YYFLTIMAIIGSCQVLIMFFG. Topologically, residues 1087 to 1099 are vacuolar; that stretch reads GAPFSIARQTKSM. Residues 1100-1120 traverse the membrane as a helical segment; sequence WITAVLCGMLSLIMGVLVRIC. The Cytoplasmic segment spans residues 1121–1173; that stretch reads PDEVAVKVFPAAFVQRFKYVFGLEFLRKNHTGKHDDEEALLEESDSPESTAFY.

Belongs to the cation transport ATPase (P-type) (TC 3.A.3) family.

The protein localises to the vacuole membrane. The enzyme catalyses Ca(2+)(in) + ATP + H2O = Ca(2+)(out) + ADP + phosphate + H(+). Its function is as follows. This magnesium-dependent enzyme catalyzes the hydrolysis of ATP coupled with the transport of calcium. Transports the calcium to the vacuole and participates in the control of the cytosolic free calcium. This chain is Calcium-transporting ATPase 2 (PMC1), found in Saccharomyces cerevisiae (strain ATCC 204508 / S288c) (Baker's yeast).